The primary structure comprises 582 residues: Probable DNA ligase (582 aa).

E243 is an ATP binding site. K245 (N6-AMP-lysine intermediate) is an active-site residue. The ATP site is built by R250, R265, E295, F335, R410, and K416.

This sequence belongs to the ATP-dependent DNA ligase family. Mg(2+) is required as a cofactor.

It catalyses the reaction ATP + (deoxyribonucleotide)n-3'-hydroxyl + 5'-phospho-(deoxyribonucleotide)m = (deoxyribonucleotide)n+m + AMP + diphosphate.. DNA ligase that seals nicks in double-stranded DNA during DNA replication, DNA recombination and DNA repair. This Dictyoglomus turgidum (strain DSM 6724 / Z-1310) protein is Probable DNA ligase.